Consider the following 345-residue polypeptide: N-acetyl-gamma-glutamyl-phosphate reductase (345 aa).

Residue C149 is part of the active site.

Belongs to the NAGSA dehydrogenase family. Type 1 subfamily.

It localises to the cytoplasm. The enzyme catalyses N-acetyl-L-glutamate 5-semialdehyde + phosphate + NADP(+) = N-acetyl-L-glutamyl 5-phosphate + NADPH + H(+). It participates in amino-acid biosynthesis; L-arginine biosynthesis; N(2)-acetyl-L-ornithine from L-glutamate: step 3/4. Catalyzes the NADPH-dependent reduction of N-acetyl-5-glutamyl phosphate to yield N-acetyl-L-glutamate 5-semialdehyde. The sequence is that of N-acetyl-gamma-glutamyl-phosphate reductase from Bacillus subtilis (strain 168).